The chain runs to 146 residues: Cytochrome c-type biogenesis protein CcmE (146 aa).

The Cytoplasmic segment spans residues 1–7; sequence MQAKHQR. The chain crosses the membrane as a helical; Signal-anchor for type II membrane protein span at residues 8 to 28; that stretch reads LILGIIALAAVIAAGFLALVA. At 29–146 the chain is on the periplasmic side; that stretch reads FKKQAAYFFT…AATQTTLQEK (118 aa). The heme site is built by His-123 and Tyr-127.

It belongs to the CcmE/CycJ family.

It localises to the cell inner membrane. In terms of biological role, heme chaperone required for the biogenesis of c-type cytochromes. Transiently binds heme delivered by CcmC and transfers the heme to apo-cytochromes in a process facilitated by CcmF and CcmH. In Zymomonas mobilis subsp. mobilis (strain ATCC 31821 / ZM4 / CP4), this protein is Cytochrome c-type biogenesis protein CcmE.